A 228-amino-acid polypeptide reads, in one-letter code: 30 kDa heat shock protein (228 aa).

Disordered stretches follow at residues 34–53 (EVQGSAPETGSRRHTQPTRT), 117–136 (KGEPHSPAAHHATVEDDVDE), and 144–174 (TATGANNQNNQQVAQRASAPTTEEKPKAPAE). The sHSP domain maps to 49–228 (QPTRTFSPKF…KHETIRIAIN (180 aa)). Positions 144–158 (TATGANNQNNQQVAQ) are enriched in low complexity.

The protein belongs to the small heat shock protein (HSP20) family.

Its subcellular location is the cytoplasm. The polypeptide is 30 kDa heat shock protein (hsp30) (Neurospora crassa (strain ATCC 24698 / 74-OR23-1A / CBS 708.71 / DSM 1257 / FGSC 987)).